Consider the following 590-residue polypeptide: Cationic amino acid transporter 8, vacuolar (590 aa).

Residues 1–85 lie on the Cytoplasmic side of the membrane; the sequence is MIPASMEEAH…ESENPMRRCL (85 aa). Residues 86–106 form a helical membrane-spanning segment; that stretch reads TWWDLLWLSFGSVVGSGVFVI. The Vacuolar segment spans residues 107 to 114; sequence TGQEARVG. A helical transmembrane segment spans residues 115 to 135; it reads AGPAVVLSYAISGVSALLSVL. Residues 136-160 are Cytoplasmic-facing; it reads CYAEFGVEIPVAGGSFSYLRVELGD. The helical transmembrane segment at 161–181 threads the bilayer; that stretch reads FIAFIAAGNILLEAMVGAAGL. Topologically, residues 182 to 209 are vacuolar; sequence GRSWSSYLASLVKNDSDYFRIKVDSFAK. The N-linked (GlcNAc...) asparagine glycan is linked to Asn195. The chain crosses the membrane as a helical span at residues 210 to 230; that stretch reads GFDLLDPVAVAVLLVANGIAM. Over 231–238 the chain is Cytoplasmic; sequence TGTKRTSW. The helical transmembrane segment at 239-259 threads the bilayer; that stretch reads LNLITSMVTVCIIVFIVVVGF. Topologically, residues 260–266 are vacuolar; the sequence is THSKTSN. Residues 267-287 form a helical membrane-spanning segment; the sequence is LVPFFPYGAKGVVQSAAVVYW. Over 288–310 the chain is Cytoplasmic; it reads SYTGFDMVANMAEETEKPSRDIP. A helical membrane pass occupies residues 311 to 331; that stretch reads IGLVGSMSMITVVYCLMALAL. At 332 to 359 the chain is on the vacuolar side; it reads TMMVKYTEIDANAAYSVAFAQIGMKWAK. Residues 360-380 form a helical membrane-spanning segment; the sequence is YLVGICALKGMTTSLLVGSLG. Over 381 to 407 the chain is Cytoplasmic; the sequence is QARYTTQIARSHMIPPWFALVHPKTGT. Residues 408 to 428 traverse the membrane as a helical segment; it reads PIYATLLVTILSSIISFFTSL. Position 429 (Glu429) is a topological domain, vacuolar. The helical transmembrane segment at 430–450 threads the bilayer; the sequence is VLSSVFSFATLFIFMLVAVAL. Residues 451–465 are Cytoplasmic-facing; sequence LVRRYYVKDVTPEAG. The helical transmembrane segment at 466–486 threads the bilayer; sequence LLKFLGFLFLIIASSIGVSAL. Residues 487 to 493 lie on the Vacuolar side of the membrane; that stretch reads WNSGVKG. Residues 494 to 514 form a helical membrane-spanning segment; sequence WIAYTVTGVIWFIGTLGLALL. The Cytoplasmic segment spans residues 515 to 522; sequence PKYRVPKV. A helical membrane pass occupies residues 523–543; it reads WGVPLVPWLPSFSIAMNLFLI. At 544–553 the chain is on the vacuolar side; the sequence is GSLGYVAFLR. The helical transmembrane segment at 554 to 574 threads the bilayer; the sequence is FIICTMVMLLYYLFVGLHATY. The Cytoplasmic portion of the chain corresponds to 575–590; sequence DVAHQPLEEAKFEGER.

The protein belongs to the amino acid-polyamine-organocation (APC) superfamily. Cationic amino acid transporter (CAT) (TC 2.A.3.3) family. As to expression, expressed in roots, stems, flowers and leaves. Mostly present in young and rapidly dividing tissues such as the shoot and root apical meristem, and in young leaves and petioles during seedling development.

It is found in the cell membrane. Permease involved in the transport of the cationic neutral or acidic amino acids. This is Cationic amino acid transporter 8, vacuolar (CAT8) from Arabidopsis thaliana (Mouse-ear cress).